Here is a 155-residue protein sequence, read N- to C-terminus: Small ribosomal subunit protein uS7cz/uS7cy (155 aa).

Belongs to the universal ribosomal protein uS7 family. In terms of assembly, part of the 30S ribosomal subunit.

It localises to the plastid. Its subcellular location is the chloroplast. In terms of biological role, one of the primary rRNA binding proteins, it binds directly to 16S rRNA where it nucleates assembly of the head domain of the 30S subunit. This chain is Small ribosomal subunit protein uS7cz/uS7cy (rps7-A), found in Piper cenocladum (Ant piper).